Reading from the N-terminus, the 198-residue chain is ADP-ribosylation factor-like protein 3 (198 aa).

Residue M1 is modified to N-acetylmethionine. Residue G24–T31 participates in GTP binding. K50 is covalently cross-linked (Glycyl lysine isopeptide (Lys-Gly) (interchain with G-Cter in ubiquitin)). GTP contacts are provided by residues D74–Q78 and N133–D136.

It belongs to the small GTPase superfamily. Arf family. Interacts with SYS1 and SLO1.

The protein resides in the golgi apparatus. Functionally, involved in the targeting of ARL1 to the Golgi. Can bind and hydrolyze GTP. This chain is ADP-ribosylation factor-like protein 3 (ARL3), found in Saccharomyces cerevisiae (strain ATCC 204508 / S288c) (Baker's yeast).